A 376-amino-acid polypeptide reads, in one-letter code: Transcription initiation factor IIA subunit 1 (376 aa).

The residue at position 2 (Ala-2) is an N-acetylalanine. Low complexity-rich tracts occupy residues 69 to 79 (QVQQQHQPQQQ) and 89 to 105 (QAQP…TQQV). Disordered regions lie at residues 69–107 (QVQQ…QVLI), 246–265 (AQAQ…PAQT), and 274–329 (DGTG…QELF). Phosphoserine; by TAF1 is present on residues Ser-280, Ser-281, Ser-316, and Ser-321. A compositionally biased stretch (acidic residues) spans 280–329 (SSEEDEDEEEDYDDDEEEDKEKDGAEDGQVEEEPLNSEDDVSDEEGQELF). DNA contacts are provided by His-343 and Arg-344.

It belongs to the TFIIA subunit 1 family. TFIIA is a heterodimer of the large unprocessed subunit 1 and a small subunit gamma. It was originally believed to be a heterotrimer of an alpha (p35), a beta (p19) and a gamma subunit (p12). TFIIA forms a complex with TBP. Part of TBP-based Pol II pre-initiation complex (PIC), in which Pol II core assembles with general transcription factors and other specific initiation factors including GTF2E1, GTF2E2, GTF2F1, GTF2F2, TCEA1, ERCC2, ERCC3, GTF2H2, GTF2H3, GTF2H4, GTF2H5, GTF2A1, GTF2A2, GTF2B and TBP; this large multi-subunit PIC complex mediates DNA unwinding and targets Pol II core to the transcription start site where the first phosphodiester bond forms. The alpha and beta subunits are postranslationally produced from the precursor formby TASP1. The cleavage promotes proteasomal degradation.

Its subcellular location is the nucleus. In terms of biological role, TFIIA is a component of the transcription machinery of RNA polymerase II and plays an important role in transcriptional activation. TFIIA in a complex with TBP mediates transcriptional activity. This is Transcription initiation factor IIA subunit 1 (GTF2A1) from Pongo abelii (Sumatran orangutan).